Here is a 331-residue protein sequence, read N- to C-terminus: UPF0284 protein PF0303 (331 aa).

Belongs to the UPF0284 family.

This chain is UPF0284 protein PF0303, found in Pyrococcus furiosus (strain ATCC 43587 / DSM 3638 / JCM 8422 / Vc1).